A 49-amino-acid chain; its full sequence is uncharacterized protein (49 aa).

This sequence belongs to the ELIP/psbS family.

Its subcellular location is the plastid. The protein resides in the cyanelle. Functionally, possible role in chlorophyll and/or carotenoid binding. This is an uncharacterized protein from Cyanophora paradoxa.